The primary structure comprises 289 residues: ATP phosphoribosyltransferase (289 aa).

Belongs to the ATP phosphoribosyltransferase family. Long subfamily. Requires Mg(2+) as cofactor.

Its subcellular location is the cytoplasm. It carries out the reaction 1-(5-phospho-beta-D-ribosyl)-ATP + diphosphate = 5-phospho-alpha-D-ribose 1-diphosphate + ATP. Its pathway is amino-acid biosynthesis; L-histidine biosynthesis; L-histidine from 5-phospho-alpha-D-ribose 1-diphosphate: step 1/9. With respect to regulation, feedback inhibited by histidine. Functionally, catalyzes the condensation of ATP and 5-phosphoribose 1-diphosphate to form N'-(5'-phosphoribosyl)-ATP (PR-ATP). Has a crucial role in the pathway because the rate of histidine biosynthesis seems to be controlled primarily by regulation of HisG enzymatic activity. The protein is ATP phosphoribosyltransferase of Methanosarcina barkeri (strain Fusaro / DSM 804).